Reading from the N-terminus, the 245-residue chain is Uridylate kinase (245 aa).

An ATP-binding site is contributed by 16–19 (KLSG). Residue glycine 58 participates in UMP binding. ATP-binding residues include glycine 59 and arginine 63. UMP is bound by residues aspartate 78 and 139–146 (TGNPFFTT). ATP is bound by residues threonine 166, tyrosine 172, and aspartate 175.

The protein belongs to the UMP kinase family. Homohexamer.

The protein resides in the cytoplasm. The catalysed reaction is UMP + ATP = UDP + ADP. Its pathway is pyrimidine metabolism; CTP biosynthesis via de novo pathway; UDP from UMP (UMPK route): step 1/1. Its activity is regulated as follows. Inhibited by UTP. Catalyzes the reversible phosphorylation of UMP to UDP. The chain is Uridylate kinase from Idiomarina loihiensis (strain ATCC BAA-735 / DSM 15497 / L2-TR).